A 413-amino-acid polypeptide reads, in one-letter code: Alpha-1-antitrypsin-like protein CM55-MS (413 aa).

The N-terminal stretch at 1-24 (MPSSISWGLLLLAALSCLGPGSLA) is a signal peptide. Gln25 is modified (pyrrolidone carboxylic acid). Asn65, Asn102, Asn165, and Asn266 each carry an N-linked (GlcNAc...) asparagine glycan. The RCL stretch occupies residues 368–387 (GATVGGITFMSRPKEVIFDR).

It belongs to the serpin family. As to expression, expressed in liver.

The protein resides in the secreted. In terms of biological role, serine protease inhibitor. In Tamias sibiricus (Siberian chipmunk), this protein is Alpha-1-antitrypsin-like protein CM55-MS.